Consider the following 171-residue polypeptide: 3-hydroxydecanoyl-[acyl-carrier-protein] dehydratase (171 aa).

The active site involves H70.

Belongs to the thioester dehydratase family. FabA subfamily. Homodimer.

The protein localises to the cytoplasm. It carries out the reaction a (3R)-hydroxyacyl-[ACP] = a (2E)-enoyl-[ACP] + H2O. It catalyses the reaction (3R)-hydroxydecanoyl-[ACP] = (2E)-decenoyl-[ACP] + H2O. The catalysed reaction is (2E)-decenoyl-[ACP] = (3Z)-decenoyl-[ACP]. The protein operates within lipid metabolism; fatty acid biosynthesis. Its function is as follows. Necessary for the introduction of cis unsaturation into fatty acids. Catalyzes the dehydration of (3R)-3-hydroxydecanoyl-ACP to E-(2)-decenoyl-ACP and then its isomerization to Z-(3)-decenoyl-ACP. Can catalyze the dehydratase reaction for beta-hydroxyacyl-ACPs with saturated chain lengths up to 16:0, being most active on intermediate chain length. This chain is 3-hydroxydecanoyl-[acyl-carrier-protein] dehydratase, found in Pseudomonas putida (strain ATCC 700007 / DSM 6899 / JCM 31910 / BCRC 17059 / LMG 24140 / F1).